Reading from the N-terminus, the 1376-residue chain is DNA-directed RNA polymerase subunit beta'' (1376 aa).

4 residues coordinate Zn(2+): Cys-221, Cys-290, Cys-297, and Cys-300. Residues 895–919 (PSGSGFPSDNELDHSNRNPFSSSYP) form a disordered region.

The protein belongs to the RNA polymerase beta' chain family. RpoC2 subfamily. In terms of assembly, in plastids the minimal PEP RNA polymerase catalytic core is composed of four subunits: alpha, beta, beta', and beta''. When a (nuclear-encoded) sigma factor is associated with the core the holoenzyme is formed, which can initiate transcription. Requires Zn(2+) as cofactor.

The protein localises to the plastid. It is found in the chloroplast. It carries out the reaction RNA(n) + a ribonucleoside 5'-triphosphate = RNA(n+1) + diphosphate. Its function is as follows. DNA-dependent RNA polymerase catalyzes the transcription of DNA into RNA using the four ribonucleoside triphosphates as substrates. In Pelargonium hortorum (Common geranium), this protein is DNA-directed RNA polymerase subunit beta''.